The primary structure comprises 383 residues: Anhydro-N-acetylmuramic acid kinase (383 aa).

Residue 9 to 16 participates in ATP binding; that stretch reads GTSVDSID.

This sequence belongs to the anhydro-N-acetylmuramic acid kinase family.

The catalysed reaction is 1,6-anhydro-N-acetyl-beta-muramate + ATP + H2O = N-acetyl-D-muramate 6-phosphate + ADP + H(+). Its pathway is amino-sugar metabolism; 1,6-anhydro-N-acetylmuramate degradation. It functions in the pathway cell wall biogenesis; peptidoglycan recycling. Catalyzes the specific phosphorylation of 1,6-anhydro-N-acetylmuramic acid (anhMurNAc) with the simultaneous cleavage of the 1,6-anhydro ring, generating MurNAc-6-P. Is required for the utilization of anhMurNAc either imported from the medium or derived from its own cell wall murein, and thus plays a role in cell wall recycling. In Crocosphaera subtropica (strain ATCC 51142 / BH68) (Cyanothece sp. (strain ATCC 51142)), this protein is Anhydro-N-acetylmuramic acid kinase.